The following is a 202-amino-acid chain: LexA repressor (202 aa).

The H-T-H motif DNA-binding region spans 28 to 48 (RAEIAQRLGFRSPNAAEEHLK). Residues Ser-119 and Lys-156 each act as for autocatalytic cleavage activity in the active site.

Belongs to the peptidase S24 family. Homodimer.

It catalyses the reaction Hydrolysis of Ala-|-Gly bond in repressor LexA.. In terms of biological role, represses a number of genes involved in the response to DNA damage (SOS response), including recA and lexA. Binds to the 16 bp palindromic sequence 5'-CTGTATATATATACAG-3'. In the presence of single-stranded DNA, RecA interacts with LexA causing an autocatalytic cleavage which disrupts the DNA-binding part of LexA, leading to derepression of the SOS regulon and eventually DNA repair. This chain is LexA repressor, found in Edwardsiella ictaluri (strain 93-146).